A 138-amino-acid polypeptide reads, in one-letter code: MKPAARRRARECAVQALYSWQLSKNDIADVELQFLSEQDVKDVDIAYFRELLSGVAVNAASLDALMAPVLSRQLEELGQVERAVLRIALFELSKRDDVPYKVAINEAIELAKTFGAADSHKFVNGVLDKVAPTVRKRK.

The protein belongs to the NusB family.

Its function is as follows. Involved in transcription antitermination. Required for transcription of ribosomal RNA (rRNA) genes. Binds specifically to the boxA antiterminator sequence of the ribosomal RNA (rrn) operons. The polypeptide is Transcription antitermination protein NusB (Yersinia enterocolitica serotype O:8 / biotype 1B (strain NCTC 13174 / 8081)).